An 802-amino-acid chain; its full sequence is LPS-assembly protein LptD (802 aa).

The first 29 residues, 1 to 29, serve as a signal peptide directing secretion; it reads MARLFSLKPLVLALGFCFGTHCAAADAVA.

The protein belongs to the LptD family. Component of the lipopolysaccharide transport and assembly complex. Interacts with LptE and LptA.

The protein localises to the cell outer membrane. Functionally, together with LptE, is involved in the assembly of lipopolysaccharide (LPS) at the surface of the outer membrane. The protein is LPS-assembly protein LptD of Neisseria meningitidis serogroup A / serotype 4A (strain DSM 15465 / Z2491).